A 29-amino-acid chain; its full sequence is Potassium-transporting ATPase KdpF subunit (29 aa).

The chain crosses the membrane as a helical span at residues 2–22; sequence LIGEAVLAVVTVAVVAYLTYV.

It belongs to the KdpF family. As to quaternary structure, the system is composed of three essential subunits: KdpA, KdpB and KdpC. The complex also contains KdpF, a small non-essential subunit.

Its subcellular location is the cell membrane. In terms of biological role, part of the high-affinity ATP-driven potassium transport (or Kdp) system, which catalyzes the hydrolysis of ATP coupled with the electrogenic transport of potassium into the cytoplasm. This subunit may be involved in stabilization of the complex. The Kdp system is essential for growth under K(+) limitation, and for survival under desiccation and salt crystal inclusion. The chain is Potassium-transporting ATPase KdpF subunit from Halobacterium salinarum (strain ATCC 29341 / DSM 671 / R1).